The sequence spans 302 residues: Acetylglutamate kinase (302 aa).

Substrate contacts are provided by residues G68–G69, R90, and N195.

This sequence belongs to the acetylglutamate kinase family. ArgB subfamily.

The protein localises to the cytoplasm. The enzyme catalyses N-acetyl-L-glutamate + ATP = N-acetyl-L-glutamyl 5-phosphate + ADP. The protein operates within amino-acid biosynthesis; L-arginine biosynthesis; N(2)-acetyl-L-ornithine from L-glutamate: step 2/4. Catalyzes the ATP-dependent phosphorylation of N-acetyl-L-glutamate. In Marinomonas sp. (strain MWYL1), this protein is Acetylglutamate kinase.